Consider the following 332-residue polypeptide: Casein kinase II subunit alpha (332 aa).

One can recognise a Protein kinase domain in the interval 34–319; it reads YEVVRKVGRG…ALEAMTHPYF (286 aa). ATP contacts are provided by residues 40-48 and Lys-63; that span reads VGRGKYSEV. Asp-151 serves as the catalytic Proton acceptor.

It belongs to the protein kinase superfamily. Ser/Thr protein kinase family. CK2 subfamily. As to quaternary structure, tetramer of two alpha and two beta chains (possible).

It catalyses the reaction L-seryl-[protein] + ATP = O-phospho-L-seryl-[protein] + ADP + H(+). The catalysed reaction is L-threonyl-[protein] + ATP = O-phospho-L-threonyl-[protein] + ADP + H(+). Its function is as follows. Casein kinases are operationally defined by their preferential utilization of acidic proteins such as caseins as substrates. The alpha chain contains the catalytic site. This chain is Casein kinase II subunit alpha (ACK2), found in Zea mays (Maize).